We begin with the raw amino-acid sequence, 86 residues long: Small ribosomal subunit protein bS16 (86 aa).

This sequence belongs to the bacterial ribosomal protein bS16 family.

The protein is Small ribosomal subunit protein bS16 of Xylella fastidiosa (strain M12).